Reading from the N-terminus, the 333-residue chain is Phosphate acyltransferase (333 aa).

The protein belongs to the PlsX family. In terms of assembly, homodimer. Probably interacts with PlsY.

It localises to the cytoplasm. It catalyses the reaction a fatty acyl-[ACP] + phosphate = an acyl phosphate + holo-[ACP]. Its pathway is lipid metabolism; phospholipid metabolism. Functionally, catalyzes the reversible formation of acyl-phosphate (acyl-PO(4)) from acyl-[acyl-carrier-protein] (acyl-ACP). This enzyme utilizes acyl-ACP as fatty acyl donor, but not acyl-CoA. The polypeptide is Phosphate acyltransferase (Lactobacillus helveticus (strain DPC 4571)).